Here is a 440-residue protein sequence, read N- to C-terminus: Glucoside xylosyltransferase 1 (440 aa).

Topologically, residues 1-6 (MRRYLR) are cytoplasmic. A helical; Signal-anchor for type II membrane protein transmembrane segment spans residues 7–29 (VVVLCVACGFCSLLYAFSQLAVS). The Lumenal segment spans residues 30 to 440 (LEEGTGGGGG…DRYARSPKEK (411 aa)). Residues N173, N237, and N278 are each glycosylated (N-linked (GlcNAc...) asparagine).

The protein belongs to the glycosyltransferase 8 family.

Its subcellular location is the membrane. It catalyses the reaction 3-O-(beta-D-glucosyl)-L-seryl-[EGF-like domain protein] + UDP-alpha-D-xylose = 3-O-[alpha-D-xylosyl-(1-&gt;3)-beta-D-glucosyl]-L-seryl-[EGF-like domain protein] + UDP + H(+). Functionally, glycosyltransferase which elongates the O-linked glucose attached to EGF-like repeats in the extracellular domain of Notch proteins by catalyzing the addition of xylose. The protein is Glucoside xylosyltransferase 1 (GXYLT1) of Homo sapiens (Human).